Reading from the N-terminus, the 160-residue chain is MIP18 family protein F45G2.10 (160 aa).

The disordered stretch occupies residues 1-32; it reads MGQERLDNANPTLFDSKPRHRPVTGTERDESV.

This sequence belongs to the MIP18 family.

Functionally, may play a role in chromosome segregation through establishment of sister chromatid cohesion. The protein is MIP18 family protein F45G2.10 of Caenorhabditis elegans.